Here is a 247-residue protein sequence, read N- to C-terminus: Carboxy-S-adenosyl-L-methionine synthase (247 aa).

S-adenosyl-L-methionine contacts are provided by residues tyrosine 40, 65–67, 90–91, 122–123, asparagine 137, and arginine 204; these read GAS, DN, and DI.

Belongs to the class I-like SAM-binding methyltransferase superfamily. Cx-SAM synthase family. Homodimer.

The catalysed reaction is prephenate + S-adenosyl-L-methionine = carboxy-S-adenosyl-L-methionine + 3-phenylpyruvate + H2O. Catalyzes the conversion of S-adenosyl-L-methionine (SAM) to carboxy-S-adenosyl-L-methionine (Cx-SAM). The chain is Carboxy-S-adenosyl-L-methionine synthase from Pseudomonas putida (strain W619).